The primary structure comprises 678 residues: Vacuolar fusion protein mon1 (678 aa).

Disordered regions lie at residues 1–116, 449–474, and 568–591; these read MDRD…YTSP, EENN…VTSP, and FETS…KTTE. Residues 10–20 are compositionally biased toward low complexity; sequence NDGTNDNNDTT. A compositionally biased stretch (polar residues) spans 63-77; that stretch reads RPTTQVSTIDISTLS. Residues 87–105 are compositionally biased toward low complexity; the sequence is STSATSATSATSATRSVAS. A compositionally biased stretch (polar residues) spans 106-116; the sequence is PQSSASGYTSP. Residues 450 to 459 show a composition bias toward low complexity; the sequence is ENNSNNTNNP. Over residues 460–471 the composition is skewed to pro residues; it reads EQPPQPPPPKPV.

The protein belongs to the MON1/SAND family.

The protein resides in the endosome. Its subcellular location is the multivesicular body membrane. It localises to the prevacuolar compartment membrane. It is found in the vacuole membrane. Its function is as follows. In complex with CCZ1, is required for multiple vacuole delivery pathways including the cytoplasm to vacuole transport (Cvt), autophagy, pexophagy and endocytosis. The MON1-CCZ1 complex acts at the fusion of vesicles with the vacuole, through its regulation of the SNARE complex during the coordinated priming and docking stages of fusion, and particularly at the stage of tethering/docking. The sequence is that of Vacuolar fusion protein mon1 (apg-13) from Neurospora crassa (strain ATCC 24698 / 74-OR23-1A / CBS 708.71 / DSM 1257 / FGSC 987).